A 402-amino-acid chain; its full sequence is Argininosuccinate synthase (402 aa).

9-17 (AYSGGLDTS) contributes to the ATP binding site. Y86 provides a ligand contact to L-citrulline. G116 is a binding site for ATP. Residues T118, N122, and D123 each coordinate L-aspartate. N122 is a binding site for L-citrulline. Positions 126, 174, 183, 259, and 271 each coordinate L-citrulline.

It belongs to the argininosuccinate synthase family. Type 1 subfamily. In terms of assembly, homotetramer.

Its subcellular location is the cytoplasm. The enzyme catalyses L-citrulline + L-aspartate + ATP = 2-(N(omega)-L-arginino)succinate + AMP + diphosphate + H(+). It functions in the pathway amino-acid biosynthesis; L-arginine biosynthesis; L-arginine from L-ornithine and carbamoyl phosphate: step 2/3. This chain is Argininosuccinate synthase, found in Anoxybacillus flavithermus (strain DSM 21510 / WK1).